The primary structure comprises 228 residues: Ribose-5-phosphate isomerase A (228 aa).

Substrate contacts are provided by residues 27-30, 86-89, and 100-103; these read TGTT, DGAD, and KGMG. The active-site Proton acceptor is the Glu-109. Lys-127 lines the substrate pocket.

This sequence belongs to the ribose 5-phosphate isomerase family. As to quaternary structure, homodimer.

It catalyses the reaction aldehydo-D-ribose 5-phosphate = D-ribulose 5-phosphate. It functions in the pathway carbohydrate degradation; pentose phosphate pathway; D-ribose 5-phosphate from D-ribulose 5-phosphate (non-oxidative stage): step 1/1. Its function is as follows. Catalyzes the reversible conversion of ribose-5-phosphate to ribulose 5-phosphate. This chain is Ribose-5-phosphate isomerase A, found in Borreliella afzelii (strain PKo) (Borrelia afzelii).